A 426-amino-acid polypeptide reads, in one-letter code: Histidine--tRNA ligase (426 aa).

Belongs to the class-II aminoacyl-tRNA synthetase family. Homodimer.

Its subcellular location is the cytoplasm. The catalysed reaction is tRNA(His) + L-histidine + ATP = L-histidyl-tRNA(His) + AMP + diphosphate + H(+). The chain is Histidine--tRNA ligase from Prochlorococcus marinus (strain MIT 9301).